The primary structure comprises 88 residues: Co-chaperonin GroES (88 aa).

This sequence belongs to the GroES chaperonin family. In terms of assembly, heptamer of 7 subunits arranged in a ring. Interacts with the chaperonin GroEL.

Its subcellular location is the cytoplasm. Together with the chaperonin GroEL, plays an essential role in assisting protein folding. The GroEL-GroES system forms a nano-cage that allows encapsulation of the non-native substrate proteins and provides a physical environment optimized to promote and accelerate protein folding. GroES binds to the apical surface of the GroEL ring, thereby capping the opening of the GroEL channel. The chain is Co-chaperonin GroES from Rubrobacter xylanophilus (strain DSM 9941 / JCM 11954 / NBRC 16129 / PRD-1).